The sequence spans 225 residues: Uridylate kinase (225 aa).

Residue D6 coordinates Mg(2+). ATP is bound at residue 9–10 (GS). Position 44 (G44) interacts with UMP. ATP is bound by residues G45 and R49. UMP is bound by residues D66 and 114 to 120 (THPGHTT). Mg(2+) contacts are provided by T120 and D121. Residues T140, N141, Y146, and D149 each contribute to the ATP site. G179 is a UMP binding site. S182 contributes to the Mg(2+) binding site. S182 lines the ATP pocket.

This sequence belongs to the UMP kinase family. In terms of assembly, homohexamer; trimer of dimers.

The protein localises to the cytoplasm. The enzyme catalyses UMP + ATP = UDP + ADP. The protein operates within pyrimidine metabolism; CTP biosynthesis via de novo pathway; UDP from UMP (UMPK route): step 1/1. Its activity is regulated as follows. Inhibited by UTP. In terms of biological role, catalyzes the reversible phosphorylation of UMP to UDP, with ATP as the most efficient phosphate donor. This chain is Uridylate kinase (pyrH), found in Pyrococcus furiosus (strain ATCC 43587 / DSM 3638 / JCM 8422 / Vc1).